A 402-amino-acid polypeptide reads, in one-letter code: Multidrug resistance protein MdtH (402 aa).

Residues 1–12 (MSRVSQARNLGK) lie on the Cytoplasmic side of the membrane. The chain crosses the membrane as a helical span at residues 13-33 (YFLLIDNMLVVLGFFVVFPLI). Residues 34-98 (SIRFVDQMGW…GFATMGIAHE (65 aa)) are Periplasmic-facing. The chain crosses the membrane as a helical span at residues 99-116 (PWLLWFSCLLSGLGGTLF). Topologically, residues 117 to 138 (DPPRSALVVKLIRPQQRGRFFS) are cytoplasmic. Residues 139-159 (LLMMQDSASAVIGALLGSWLL) traverse the membrane as a helical segment. Over 160–164 (QYDFR) the chain is Periplasmic. A helical membrane pass occupies residues 165 to 185 (LVCATGPVLFVLCAAFNAWLL). Residues 186–213 (PAWKLSTVRTPVREGMTRVMRDKRFVTY) lie on the Cytoplasmic side of the membrane. A helical transmembrane segment spans residues 214–234 (VLTLAGYYMLAVQVMLMLPIM). Over 235-243 (VNDVAGAPS) the chain is Periplasmic. A helical transmembrane segment spans residues 244 to 264 (AVKWMYAIEACLSLTLLYPIA). At 265–276 (RWSEKHFRLEHR) the chain is on the cytoplasmic side. A helical transmembrane segment spans residues 277-297 (LMAGLLIMSLSMMPVGMVSGL). Over 298 to 299 (QQ) the chain is Periplasmic. The chain crosses the membrane as a helical span at residues 300 to 320 (LFTLICLFYIGSIIAEPARET). Topologically, residues 321 to 339 (LSASLADARARGSYMGFSR) are cytoplasmic. A helical transmembrane segment spans residues 340–360 (LGLAIGGAIGYIGGGWLFDLG). At 361-367 (KSAHQPE) the chain is on the periplasmic side. A helical transmembrane segment spans residues 368 to 388 (LPWMMLGIIGIFTFLALGWQF). Residues 389–402 (SQKRAARRLLERDA) lie on the Cytoplasmic side of the membrane.

The protein belongs to the major facilitator superfamily. DHA1 family. MdtH (TC 2.A.1.2.21) subfamily.

It is found in the cell inner membrane. The chain is Multidrug resistance protein MdtH from Shigella flexneri serotype 5b (strain 8401).